A 513-amino-acid chain; its full sequence is ATP synthase subunit alpha (513 aa).

169–176 serves as a coordination point for ATP; that stretch reads GDRQTGKT.

It belongs to the ATPase alpha/beta chains family. As to quaternary structure, F-type ATPases have 2 components, CF(1) - the catalytic core - and CF(0) - the membrane proton channel. CF(1) has five subunits: alpha(3), beta(3), gamma(1), delta(1), epsilon(1). CF(0) has three main subunits: a(1), b(2) and c(9-12). The alpha and beta chains form an alternating ring which encloses part of the gamma chain. CF(1) is attached to CF(0) by a central stalk formed by the gamma and epsilon chains, while a peripheral stalk is formed by the delta and b chains.

The protein resides in the cell inner membrane. It carries out the reaction ATP + H2O + 4 H(+)(in) = ADP + phosphate + 5 H(+)(out). Its function is as follows. Produces ATP from ADP in the presence of a proton gradient across the membrane. The alpha chain is a regulatory subunit. This Ruegeria sp. (strain TM1040) (Silicibacter sp.) protein is ATP synthase subunit alpha.